We begin with the raw amino-acid sequence, 98 residues long: NADH-ubiquinone oxidoreductase chain 4L (98 aa).

Helical transmembrane passes span Pro2 to Phe22, Ser29 to Leu49, and Ile61 to Val81.

It belongs to the complex I subunit 4L family. Core subunit of respiratory chain NADH dehydrogenase (Complex I) which is composed of 45 different subunits.

Its subcellular location is the mitochondrion inner membrane. The catalysed reaction is a ubiquinone + NADH + 5 H(+)(in) = a ubiquinol + NAD(+) + 4 H(+)(out). Functionally, core subunit of the mitochondrial membrane respiratory chain NADH dehydrogenase (Complex I) which catalyzes electron transfer from NADH through the respiratory chain, using ubiquinone as an electron acceptor. Part of the enzyme membrane arm which is embedded in the lipid bilayer and involved in proton translocation. The chain is NADH-ubiquinone oxidoreductase chain 4L (MT-ND4L) from Microcebus mamiratra (Claire's mouse lemur).